A 228-amino-acid chain; its full sequence is Probable 26S proteasome regulatory subunit p28 (228 aa).

6 ANK repeats span residues 1 to 30 (MSNY…SLLL), 35 to 64 (DGRI…NVNL), 71 to 100 (SGWT…KPDL), 106 to 135 (QGVT…SVRI), 139 to 168 (FNQI…SAVN), and 173 to 203 (QGWT…EYDL).

Interacts with RPT3.

In terms of biological role, acts as a chaperone during the assembly of the 26S proteasome, specifically of the 19S regulatory complex (RC) and appears to have an overlapping role with RPN14. The chain is Probable 26S proteasome regulatory subunit p28 (NAS6) from Saccharomyces cerevisiae (strain ATCC 204508 / S288c) (Baker's yeast).